A 392-amino-acid chain; its full sequence is Probable protein phosphatase 2C 78 (392 aa).

Positions 39–342 (ASGEYSIAVA…DDITVVVVYL (304 aa)) constitute a PPM-type phosphatase domain. Mn(2+) is bound by residues aspartate 73, glycine 74, aspartate 274, and aspartate 333.

This sequence belongs to the PP2C family. The cofactor is Mg(2+). Mn(2+) serves as cofactor.

The enzyme catalyses O-phospho-L-seryl-[protein] + H2O = L-seryl-[protein] + phosphate. It catalyses the reaction O-phospho-L-threonyl-[protein] + H2O = L-threonyl-[protein] + phosphate. The protein is Probable protein phosphatase 2C 78 of Oryza sativa subsp. japonica (Rice).